Here is a 694-residue protein sequence, read N- to C-terminus: Elongation factor G (694 aa).

In terms of domain architecture, tr-type G spans 11–285 (KDYRNIGIMA…AVIDYLPSPL (275 aa)). Residues 20-27 (AHIDAGKT), 84-88 (DTPGH), and 138-141 (NKMD) contribute to the GTP site.

This sequence belongs to the TRAFAC class translation factor GTPase superfamily. Classic translation factor GTPase family. EF-G/EF-2 subfamily.

Its subcellular location is the cytoplasm. Its function is as follows. Catalyzes the GTP-dependent ribosomal translocation step during translation elongation. During this step, the ribosome changes from the pre-translocational (PRE) to the post-translocational (POST) state as the newly formed A-site-bound peptidyl-tRNA and P-site-bound deacylated tRNA move to the P and E sites, respectively. Catalyzes the coordinated movement of the two tRNA molecules, the mRNA and conformational changes in the ribosome. The sequence is that of Elongation factor G from Mycoplasma mobile (strain ATCC 43663 / 163K / NCTC 11711) (Mesomycoplasma mobile).